A 745-amino-acid chain; its full sequence is Elongation factor G, mitochondrial (745 aa).

Positions 40–317 constitute a tr-type G domain; the sequence is EKIRNIGISA…AVLDYLPNPG (278 aa). Residues 49–56, 116–120, and 170–173 contribute to the GTP site; these read AHIDSGKT, DTPGH, and NKLD.

The protein belongs to the TRAFAC class translation factor GTPase superfamily. Classic translation factor GTPase family. EF-G/EF-2 subfamily.

The protein localises to the mitochondrion. The protein operates within protein biosynthesis; polypeptide chain elongation. Functionally, mitochondrial GTPase that catalyzes the GTP-dependent ribosomal translocation step during translation elongation. During this step, the ribosome changes from the pre-translocational (PRE) to the post-translocational (POST) state as the newly formed A-site-bound peptidyl-tRNA and P-site-bound deacylated tRNA move to the P and E sites, respectively. Catalyzes the coordinated movement of the two tRNA molecules, the mRNA and conformational changes in the ribosome. Essential during development as it acts as a retrograde signal from mitochondria to the nucleus to slow down cell proliferation if mitochondrial energy output is low. This chain is Elongation factor G, mitochondrial, found in Drosophila willistoni (Fruit fly).